The following is a 493-amino-acid chain: Vinyl phenol reductase (493 aa).

Positions 19, 38, 46, 50, 52, 156, 224, 448, and 467 each coordinate FAD.

The protein belongs to the FAD-dependent oxidoreductase 2 family. FRD/SDH subfamily. It depends on FAD as a cofactor.

It carries out the reaction 4-vinylphenol + NADH + H(+) = 4-ethylphenol + NAD(+). The catalysed reaction is 3,4-dihydroxystyrene + NADH + H(+) = 4-ethylcatechol + NAD(+). It catalyses the reaction 2-methoxy-4-vinylphenol + NADH + H(+) = 4-ethyl-2-methoxyphenol + NAD(+). Involved in the production of ethylphenols during the degradation of hydroxycinnamic acids. Catalyzes the reduction of vinylphenols (4-vinylphenol (4-hydroxystyrene), 4-vinylcatechol (3,4-dihydroxystyrene), and 4-vinylguaiacol (2-methoxy-4-vinylphenol)) to their corresponding ethylphenols (4-ethylphenol, 4-ethylcatechol, and 4-ethylguaiacol, respectively) in the presence of NADH. These compounds are considered the most important flavor components of fermented soy sauce, and, on the other hand, are considered off flavor and responsible for sensorial wine and cider alteration. The 4-ethylphenol produced by the gut bacteria L.plantarum strain WCFS1 can get subsequent sulfation to 4-ethylphenyl sulfate (4EPS) by host sulfotransferase (SULT1A1); 4EPS can enter the brain and seems to alter brain activity. Therefore, this enzyme likely plays a role in gut microbiota-host metabolic interactions. The chain is Vinyl phenol reductase from Lactiplantibacillus plantarum (strain ATCC BAA-793 / NCIMB 8826 / WCFS1) (Lactobacillus plantarum).